The following is an 84-amino-acid chain: MKVKIKCWNGVATWLWVANDENCGICRMAFNGCCPDCKVPGDDCPLVWGQCSHCFHMHCILKWLHAQQVQQHCPMCRQEWKFKE.

The Zn(2+) site is built by Cys-23, Cys-26, Cys-34, Cys-37, Cys-44, Cys-51, His-53, His-56, His-58, Cys-59, Cys-73, and Cys-76. Residues 34-77 form an RING-type zinc finger; sequence CPDCKVPGDDCPLVWGQCSHCFHMHCILKWLHAQQVQQHCPMCR.

This sequence belongs to the RING-box family. As to quaternary structure, the mammalian APC/C is composed at least of 14 distinct subunits ANAPC1, ANAPC2, CDC27/APC3, ANAPC4, ANAPC5, CDC16/APC6, ANAPC7, CDC23/APC8, ANAPC10, ANAPC11, CDC26/APC12, ANAPC13, ANAPC15 and ANAPC16 that assemble into a complex of at least 19 chains with a combined molecular mass of around 1.2 MDa; APC/C interacts with FZR1 and FBXO5. Interacts with the cullin domain of ANAPC2. Interacts with UBE2D2. Post-translationally, auto-ubiquitinated. In terms of tissue distribution, expressed at high levels in skeletal muscle and heart; in moderate levels in brain, kidney, and liver; and at low levels in colon, thymus, spleen, small intestine, placenta, lung and peripheral blood leukocyte.

It is found in the cytoplasm. It localises to the nucleus. The protein operates within protein modification; protein ubiquitination. Functionally, together with the cullin protein ANAPC2, constitutes the catalytic component of the anaphase promoting complex/cyclosome (APC/C), a cell cycle-regulated E3 ubiquitin ligase that controls progression through mitosis and the G1 phase of the cell cycle. The APC/C complex acts by mediating ubiquitination and subsequent degradation of target proteins: it mainly mediates the formation of 'Lys-11'-linked polyubiquitin chains and, to a lower extent, the formation of 'Lys-48'- and 'Lys-63'-linked polyubiquitin chains. The APC/C complex catalyzes assembly of branched 'Lys-11'-/'Lys-48'-linked branched ubiquitin chains on target proteins. May recruit the E2 ubiquitin-conjugating enzymes to the complex. The polypeptide is Anaphase-promoting complex subunit 11 (ANAPC11) (Homo sapiens (Human)).